The chain runs to 204 residues: ATP phosphoribosyltransferase (204 aa).

Belongs to the ATP phosphoribosyltransferase family. Short subfamily. Heteromultimer composed of HisG and HisZ subunits.

It is found in the cytoplasm. It catalyses the reaction 1-(5-phospho-beta-D-ribosyl)-ATP + diphosphate = 5-phospho-alpha-D-ribose 1-diphosphate + ATP. The protein operates within amino-acid biosynthesis; L-histidine biosynthesis; L-histidine from 5-phospho-alpha-D-ribose 1-diphosphate: step 1/9. Functionally, catalyzes the condensation of ATP and 5-phosphoribose 1-diphosphate to form N'-(5'-phosphoribosyl)-ATP (PR-ATP). Has a crucial role in the pathway because the rate of histidine biosynthesis seems to be controlled primarily by regulation of HisG enzymatic activity. The protein is ATP phosphoribosyltransferase of Staphylococcus epidermidis (strain ATCC 35984 / DSM 28319 / BCRC 17069 / CCUG 31568 / BM 3577 / RP62A).